The following is a 197-amino-acid chain: TATA-box-binding protein (197 aa).

2 repeat units span residues 10–86 (IENI…VKLL) and 101–177 (IQNI…YNQL).

It belongs to the TBP family.

Functionally, general factor that plays a role in the activation of archaeal genes transcribed by RNA polymerase. Binds specifically to the TATA box promoter element which lies close to the position of transcription initiation. The sequence is that of TATA-box-binding protein from Pyrobaculum neutrophilum (strain DSM 2338 / JCM 9278 / NBRC 100436 / V24Sta) (Thermoproteus neutrophilus).